The primary structure comprises 1574 residues: MAERGLEPSPAAVAALPPEVRAQLAELELELSEGDITQKGYEKKRSKLLSPYSPQTQETDSIGQKERNQTPAPTAAQTSAPSKYHRSRSGGARDERYRSDIHTEAVQAALAKHKEQKMALPMPTKRRSTFVQSPADACTPPDTSSASEDEGSLRRQAALSAALQQSLQNAESWINRSIQGSSTSSSASSTLSHGEVKGTSGSLADVFANTRIENVSAPPDVTATTSSSSSSLRPANIDLPPSGIVKGMHKGSNRSSLMDTADGVPVNSRVSTKIQQLLNTLKRPKRPPLKEFFVDDSEEIVEGIPQPDPNQPKPEGRQMTPVKGEPLGVICNWPPALESALQRWGSTQAKCPCLTGLDVTGKPVYTLTYGKLWSRSLKLAYTLLNKLGTKNEPVLKPGDRVALVYPNNDPVMFMVAFYGCLLAEVIPVPIEVPLTRKDAGGQQIGFLLGSCGIALALTSEICLKGLPKTQNGEIVQFKGWPRLKWVVTDSKYLSKPPKDWQPHISPAGTEPAYIEYKTSKEGSVMGVTVSRLAMLSQCQALSQACNYSEGETVVNVLDFKKDAGLWHGMFANVMNKMHTISVPYSVMKTCPLSWVQRVHAHKAKVALVKCRDLHWAMMAHRDQRDVSLSSLRMLIVTDGANPWSVSSCDAFLSLFQSHGLKPEAICPCATSAEAMTVAIRRPGVPGAPLPGRAILSMNGLSYGVIRVNTEDKNSALTVQDVGHVMPGGMMCIVKPDGLPQLCRTDEIGEICVSSRTGGMMYFGLAGVTKNTFEVIPVTSSGSPVGDVPFIRSGLLGFVGPGSLVFVVGKMDGLLMVSGRRHNADDIVATGLAVESIKTVYRGRIAVFSVSVFYDERIVVVAEQRPDASEEDSFQWMSRVLQAIDSIHQVGVYCLALVPANTLPKTPLGGIHISQTKQLFLEGSLHPCNILMCPHTCVTNLPKPRQKQPGVGPASVMVGNLVAGKRIAQAAGRDLGQIEENDLVRKHQFLAEILQWRAQATPDHVLFMLLNAKGTTVCTASCLQLHKRAERIASVLGDKGHLNAGDNVVLLYPPGIELIAAFYGCLYAGCIPVTVRPPHAQNLTATLPTVRMVVDVSKAACVLTTQTLMRLLKSREAAAAVDVKTWPAIIDTDDLPRKRLPQLYKPPTPEMLAYLDFSVSTTGMLTGVKMSHSAVNALCRAIKLQCELYSSRQIAICLDPYCGLGFALWCLCSVYSGHQSVLIPPMELENNLFLWLATVNQYKIRDTFCSYSVMELCTKGLGNQVEVLKTRGINLSCIRTCVVVAEERPRVSLQQSFSKLFKDIGLSPRAVSTTFGSRVNVAICLQGTSGPDPTTVYVDLKSLRHDRVRLVERGAPQSLLLSESGKILPGVKVVIVNPETKGPVGDSHLGEIWVNSPHTASGYYTIYDSETLQADHFNTRLSFGDAAQTLWARTGYLGFVRRTELTAATGERHDALYVVGALDETLELRGLRYHPIDIETSVSRVHRSIAECAVFTWTNLLVVVVELCGSEQEALDLVPLVTNVVLEEHYLIVGVVVVVDPGVVPINSRGEKQRMHLRDSFLADQLDPIYVAYNM.

Phosphoserine is present on residues S9, S50, and S53. One can recognise a DMAP1-binding domain in the interval 12-130; the sequence is AVAALPPEVR…PMPTKRRSTF (119 aa). The segment at 31–166 is disordered; the sequence is LSEGDITQKG…AALSAALQQS (136 aa). Residues 52–62 show a composition bias toward polar residues; that stretch reads YSPQTQETDSI. Positions 69–82 are enriched in low complexity; that stretch reads QTPAPTAAQTSAPS. At T70 the chain carries Phosphothreonine. Residues 91 to 103 are compositionally biased toward basic and acidic residues; sequence GARDERYRSDIHT. The residue at position 99 (S99) is a Phosphoserine. Position 139 is a phosphothreonine (T139). Phosphoserine occurs at positions 145, 147, and 152. The span at 154–166 shows a compositional bias: low complexity; that stretch reads RRQAALSAALQQS. Phosphoserine occurs at positions 177, 192, and 202. The interval 178–200 is disordered; it reads IQGSSTSSSASSTLSHGEVKGTS. Over residues 181–192 the composition is skewed to low complexity; the sequence is SSTSSSASSTLS. Positions 217 to 244 are disordered; sequence APPDVTATTSSSSSSLRPANIDLPPSGI. At S256 the chain carries Phosphoserine.

Belongs to the DIP2 family. As to quaternary structure, interacts with alpha-tubulin. In terms of tissue distribution, highly expressed in brain and spinal cord (at protein level). In brain, expression is detected in the main olfactory bulb, cortex, lateral ventricle, cornu ammonis 1, cornu ammonis 3, dentate gyrus, striatum, cerebellar cortex and medial habenula. Expressed primarily in neurons including excitatory pyramidal neurons and inhibitory interneurons.

The protein localises to the cell projection. Its subcellular location is the dendrite. It is found in the axon. It localises to the perikaryon. Negatively regulates axonal outgrowth and is essential for normal synaptic transmission. Not required for regulation of axon polarity. Promotes acetylation of alpha-tubulin. This Mus musculus (Mouse) protein is Disco-interacting protein 2 homolog B (Dip2b).